The following is a 189-amino-acid chain: Glycerol-3-phosphate acyltransferase (189 aa).

5 consecutive transmembrane segments (helical) span residues 1 to 21 (MVWLLAILAYLLGSLSFAVLL), 50 to 70 (KLAILTLLGDVGKGLLPVLVA), 72 to 92 (WLGLGVMEEAWVGIAAVIGHL), 111 to 131 (MLLGLYPPAVLLAAAAWLLTF), and 151 to 171 (LLAWQQPGALLPMTVLTGLIV).

This sequence belongs to the PlsY family. In terms of assembly, probably interacts with PlsX.

It is found in the cell inner membrane. It carries out the reaction an acyl phosphate + sn-glycerol 3-phosphate = a 1-acyl-sn-glycero-3-phosphate + phosphate. It participates in lipid metabolism; phospholipid metabolism. Functionally, catalyzes the transfer of an acyl group from acyl-phosphate (acyl-PO(4)) to glycerol-3-phosphate (G3P) to form lysophosphatidic acid (LPA). This enzyme utilizes acyl-phosphate as fatty acyl donor, but not acyl-CoA or acyl-ACP. This is Glycerol-3-phosphate acyltransferase from Pseudomonas aeruginosa (strain LESB58).